Reading from the N-terminus, the 319-residue chain is Cobalamin biosynthesis protein CobD (319 aa).

A run of 3 helical transmembrane segments spans residues 54-76, 154-173, and 301-318; these read VLLL…WLSY, GVTA…ALLY, and VLGF…IYAI.

This sequence belongs to the CobD/CbiB family.

Its subcellular location is the cell membrane. The protein operates within cofactor biosynthesis; adenosylcobalamin biosynthesis. Functionally, converts cobyric acid to cobinamide by the addition of aminopropanol on the F carboxylic group. This chain is Cobalamin biosynthesis protein CobD, found in Halalkalibacterium halodurans (strain ATCC BAA-125 / DSM 18197 / FERM 7344 / JCM 9153 / C-125) (Bacillus halodurans).